Here is a 63-residue protein sequence, read N- to C-terminus: Arabinogalactan peptide 3 (63 aa).

The signal sequence occupies residues 1 to 26 (MASRILYAAAVVAAVAVSSLAGVAYA). The GPI-anchor amidated serine moiety is linked to residue Ser-36. A propeptide spans 37–63 (GAAAVSSSLVAAVLCPAVALLLGNLRQ) (removed in mature form).

The protein belongs to the AG-peptide AGP family. Post-translationally, O-glycosylated on hydroxyprolines; noncontiguous hydroxylproline residues are glycosylated with arabinogalactan. As to expression, expressed in roots, stems, leaves, flowers and seeds.

It localises to the vacuole. The protein localises to the aleurone grain membrane. Its function is as follows. Proteoglycan that seems to be implicated in diverse developmental roles such as differentiation, cell-cell recognition, embryogenesis and programmed cell death. This chain is Arabinogalactan peptide 3 (AGPEP3), found in Oryza sativa subsp. japonica (Rice).